A 310-amino-acid chain; its full sequence is Protoheme IX farnesyltransferase (310 aa).

Transmembrane regions (helical) follow at residues 21-43 (LLKP…VAPV), 48-70 (MIAL…LNMW), 95-115 (GEAL…LGLA), 118-138 (LFAA…YSMW), 147-167 (IVIG…VATG), 174-194 (LFMF…LALF), 220-240 (VLVY…TGIG), 243-263 (LYLA…VRIW), and 289-309 (LFLH…GLGG).

Belongs to the UbiA prenyltransferase family. Protoheme IX farnesyltransferase subfamily. As to quaternary structure, interacts with CtaA.

Its subcellular location is the cell inner membrane. The catalysed reaction is heme b + (2E,6E)-farnesyl diphosphate + H2O = Fe(II)-heme o + diphosphate. It functions in the pathway porphyrin-containing compound metabolism; heme O biosynthesis; heme O from protoheme: step 1/1. Functionally, converts heme B (protoheme IX) to heme O by substitution of the vinyl group on carbon 2 of heme B porphyrin ring with a hydroxyethyl farnesyl side group. The chain is Protoheme IX farnesyltransferase from Cereibacter sphaeroides (strain KD131 / KCTC 12085) (Rhodobacter sphaeroides).